The primary structure comprises 249 residues: 1-(5-phosphoribosyl)-5-[(5-phosphoribosylamino)methylideneamino] imidazole-4-carboxamide isomerase (249 aa).

The active-site Proton acceptor is the Asp-11. Asp-133 serves as the catalytic Proton donor.

This sequence belongs to the HisA/HisF family.

It is found in the cytoplasm. The enzyme catalyses 1-(5-phospho-beta-D-ribosyl)-5-[(5-phospho-beta-D-ribosylamino)methylideneamino]imidazole-4-carboxamide = 5-[(5-phospho-1-deoxy-D-ribulos-1-ylimino)methylamino]-1-(5-phospho-beta-D-ribosyl)imidazole-4-carboxamide. The protein operates within amino-acid biosynthesis; L-histidine biosynthesis; L-histidine from 5-phospho-alpha-D-ribose 1-diphosphate: step 4/9. The chain is 1-(5-phosphoribosyl)-5-[(5-phosphoribosylamino)methylideneamino] imidazole-4-carboxamide isomerase from Actinobacillus succinogenes (strain ATCC 55618 / DSM 22257 / CCUG 43843 / 130Z).